A 328-amino-acid polypeptide reads, in one-letter code: Alanine racemase (328 aa).

The active-site Proton acceptor; specific for D-alanine is the Lys-33. The residue at position 33 (Lys-33) is an N6-(pyridoxal phosphate)lysine. Position 118 (Arg-118) interacts with substrate. Residue Tyr-237 is the Proton acceptor; specific for L-alanine of the active site. Met-283 serves as a coordination point for substrate.

This sequence belongs to the alanine racemase family. The cofactor is pyridoxal 5'-phosphate.

It carries out the reaction L-alanine = D-alanine. Its pathway is amino-acid biosynthesis; D-alanine biosynthesis; D-alanine from L-alanine: step 1/1. Catalyzes the interconversion of L-alanine and D-alanine. May also act on other amino acids. This chain is Alanine racemase (alr), found in Campylobacter jejuni subsp. doylei (strain ATCC BAA-1458 / RM4099 / 269.97).